The chain runs to 636 residues: Polyglycine hydrolase (636 aa).

The N-terminal stretch at 1–22 is a signal peptide; that stretch reads MHSLSLRRLLTSVLSLCSCSSA. N-linked (GlcNAc...) asparagine glycans are attached at residues asparagine 30 and asparagine 151. Cysteine 141 and cysteine 175 are disulfide-bonded. Serine 363 is a catalytic residue. Residues asparagine 383 and asparagine 481 are each glycosylated (N-linked (GlcNAc...) asparagine). The segment at 512–540 is disordered; it reads TEDRIVQESKNTGQDPVHPQSAKLVPGPH.

It belongs to the peptidase S12 family.

The protein localises to the secreted. It catalyses the reaction a glycyl-glycyl-[protein] + H2O = N-terminal glycyl-[protein] + [protein]-C-terminal glycine. In terms of biological role, serine-type endopeptidase that cleaves Gly-Gly bonds in the polyglycine linker of host plant class IV chitinases to disrupt their chitin-binding, and thereby plays a role in lowering the defense responses of the host to the fungus. Degrades Z.mays Endochitinase A (CHIA) in vitro, although corn is not its host species. This chain is Polyglycine hydrolase, found in Fusarium vanettenii (strain ATCC MYA-4622 / CBS 123669 / FGSC 9596 / NRRL 45880 / 77-13-4) (Fusarium solani subsp. pisi).